Here is a 249-residue protein sequence, read N- to C-terminus: 1-(5-phosphoribosyl)-5-[(5-phosphoribosylamino)methylideneamino] imidazole-4-carboxamide isomerase (249 aa).

Asp-8 functions as the Proton acceptor in the catalytic mechanism. Residue Asp-131 is the Proton donor of the active site.

Belongs to the HisA/HisF family.

The protein resides in the cytoplasm. The enzyme catalyses 1-(5-phospho-beta-D-ribosyl)-5-[(5-phospho-beta-D-ribosylamino)methylideneamino]imidazole-4-carboxamide = 5-[(5-phospho-1-deoxy-D-ribulos-1-ylimino)methylamino]-1-(5-phospho-beta-D-ribosyl)imidazole-4-carboxamide. It participates in amino-acid biosynthesis; L-histidine biosynthesis; L-histidine from 5-phospho-alpha-D-ribose 1-diphosphate: step 4/9. In Leptothrix cholodnii (strain ATCC 51168 / LMG 8142 / SP-6) (Leptothrix discophora (strain SP-6)), this protein is 1-(5-phosphoribosyl)-5-[(5-phosphoribosylamino)methylideneamino] imidazole-4-carboxamide isomerase.